Here is a 62-residue protein sequence, read N- to C-terminus: Teretoxin Tsu1.1 (62 aa).

Positions 1 to 21 are cleaved as a signal peptide; it reads MSCFPVLFVMMLLASQSVWAF. A propeptide spanning residues 22 to 40 is cleaved from the precursor; it reads PEPETRIGTARDAESMGVR.

It belongs to the teretoxin A (TA) superfamily. Contains 2 disulfide bonds. As to expression, expressed by the venom duct.

Its subcellular location is the secreted. The protein is Teretoxin Tsu1.1 of Terebra subulata (Chocolate spotted auger).